Reading from the N-terminus, the 431-residue chain is tRNA(Ile)-lysidine synthase (431 aa).

ATP is bound at residue 19–24 (STGIDS).

It belongs to the tRNA(Ile)-lysidine synthase family.

The protein localises to the cytoplasm. It catalyses the reaction cytidine(34) in tRNA(Ile2) + L-lysine + ATP = lysidine(34) in tRNA(Ile2) + AMP + diphosphate + H(+). In terms of biological role, ligates lysine onto the cytidine present at position 34 of the AUA codon-specific tRNA(Ile) that contains the anticodon CAU, in an ATP-dependent manner. Cytidine is converted to lysidine, thus changing the amino acid specificity of the tRNA from methionine to isoleucine. The protein is tRNA(Ile)-lysidine synthase of Staphylococcus aureus (strain MRSA252).